Reading from the N-terminus, the 431-residue chain is Mannan endo-1,4-beta-mannosidase 5 (431 aa).

Positions 1–24 (MVPTRNRPMLRILGFFICAAFIYL) are cleaved as a signal peptide. Residue Asn-45 is glycosylated (N-linked (GlcNAc...) asparagine). Residue Trp-97 participates in substrate binding. The N-linked (GlcNAc...) asparagine glycan is linked to Asn-168. Residue Asn-213 participates in substrate binding. Glu-214 serves as the catalytic Proton donor. An N-linked (GlcNAc...) asparagine glycan is attached at Asn-282. Substrate is bound at residue Tyr-294. An N-linked (GlcNAc...) asparagine glycan is attached at Asn-301. Catalysis depends on Glu-334, which acts as the Nucleophile. Trp-376 serves as a coordination point for substrate.

It belongs to the glycosyl hydrolase 5 (cellulase A) family. As to expression, expressed in stems.

The protein resides in the secreted. The catalysed reaction is Random hydrolysis of (1-&gt;4)-beta-D-mannosidic linkages in mannans, galactomannans and glucomannans.. The chain is Mannan endo-1,4-beta-mannosidase 5 (MAN5) from Arabidopsis thaliana (Mouse-ear cress).